Consider the following 318-residue polypeptide: 2-keto-3-deoxygluconate permease (318 aa).

Transmembrane regions (helical) follow at residues 10–30 (LPGG…TLWP), 42–62 (GLIS…GATI), 82–102 (IAVA…GGVS), 109–129 (LSVL…YAAL), 139–159 (AGAV…LILG), 163–183 (LASF…LGFA), 201–221 (TLVP…TIAH), 224–244 (TSGV…LLLA), 257–277 (VAAS…AGMA), and 289–309 (ALVA…TALY).

This sequence belongs to the KdgT transporter family.

It is found in the cell inner membrane. It catalyses the reaction 2-dehydro-3-deoxy-D-gluconate(in) + H(+)(in) = 2-dehydro-3-deoxy-D-gluconate(out) + H(+)(out). In terms of biological role, catalyzes the proton-dependent uptake of 2-keto-3-deoxygluconate (KDG) into the cell. This Xanthomonas axonopodis pv. citri (strain 306) protein is 2-keto-3-deoxygluconate permease.